Here is a 20-residue protein sequence, read N- to C-terminus: Non-specific lipid-transfer protein (20 aa).

Belongs to the plant LTP family.

Its function is as follows. Plant non-specific lipid-transfer proteins transfer phospholipids as well as galactolipids across membranes. May play a role in wax or cutin deposition in the cell walls of expanding epidermal cells and certain secretory tissues. The polypeptide is Non-specific lipid-transfer protein (Citrus limon (Lemon)).